We begin with the raw amino-acid sequence, 217 residues long: Ras-related protein Rab-39A (217 aa).

GTP contacts are provided by serine 17, glycine 20, lysine 21, serine 22, cysteine 23, and threonine 44. Serine 22 provides a ligand contact to Mg(2+). A switch-I region spans residues proline 39–valine 47. Mg(2+) is bound by residues threonine 44 and aspartate 68. Residues glycine 71, histidine 127, lysine 128, aspartate 130, alanine 158, and lysine 159 each coordinate GTP. The interval glycine 71 to valine 87 is switch-II. S-geranylgeranyl cysteine attachment occurs at residues cysteine 215 and cysteine 217. Cysteine 217 bears the Cysteine methyl ester mark.

It belongs to the small GTPase superfamily. Rab family. As to quaternary structure, interacts (GDP-bound) with C9orf72; C9orf72 acts as a GEF for RAB39A. Interacts (GTP-bound) with HOPS complex components VPS39 and VPS41, and STX17; interaction between HOPS components and RAB39A contributes to obtaining a functional HOPS complex that promotes membrane fusion driven by STX17-SNAP29-VAMP8. Interacts with BECN1. Probably associates with the PI3K (PI3KC3/PI3K-III/class III phosphatidylinositol 3-kinase) complex. Interacts with UACA. Interacts with isoform a of RASSF1. Does not interact with isoform c of RASSF1. Mg(2+) is required as a cofactor. In terms of processing, prenylated. Prenylation is required for association with cellular membranes.

It is found in the cell membrane. It localises to the cytoplasmic vesicle. Its subcellular location is the phagosome membrane. The protein resides in the late endosome membrane. The protein localises to the lysosome membrane. It is found in the autolysosome membrane. It catalyses the reaction GTP + H2O = GDP + phosphate + H(+). Regulated by guanine nucleotide exchange factors (GEFs) including c9Orf72, which promote the exchange of bound GDP for free GTP. Regulated by GTPase activating proteins (GAPs) which increase the GTP hydrolysis activity. Inhibited by GDP dissociation inhibitors (GDIs). Its function is as follows. The small GTPases Rab are key regulators of intracellular membrane trafficking, from the formation of transport vesicles to their fusion with membranes. Rabs cycle between an inactive GDP-bound form and an active GTP-bound form that is able to recruit to membranes different sets of downstream effectors directly responsible for vesicle formation, movement, tethering and fusion. RAB39A regulates autophagosome-lysosome fusion via recruitment of the HOPS endosomal tethering complex onto lysosomes; this process involves lysosomal RAB39A and autophagosomal RAB2A recruitment of HOPS subcomplexes VPS41-VPS16-VPS18-VPS33A and VPS39-VPS11, respectively, which assemble into a functional complex to mediate membrane tethering and SNAREs-driven membrane fusion. Also negatively regulates lipopolysaccharide (LPS)-induced autophagosome formation in macrophages, possibly by implicating PI3K. Promotes the delivery of MHC-I molecules from the ER to phagosomes and the generation of peptide-loaded MHC-I complexes in phagosomes, thus enhancing antigen cross-presentation by dendritic cells. Plays a role in the maturation and acidification of phagosomes that engulf pathogens, such as S.aureus and M.tuberculosis. Plays a role in the fusion of phagosomes with lysosomes. May be involved in multiple neurite formation. The protein is Ras-related protein Rab-39A of Mus musculus (Mouse).